The following is a 280-amino-acid chain: 4-diphosphocytidyl-2-C-methyl-D-erythritol kinase (280 aa).

Lys-8 is an active-site residue. 91-101 lines the ATP pocket; sequence PVSAGLAGGST. The active site involves Asp-133.

This sequence belongs to the GHMP kinase family. IspE subfamily.

It catalyses the reaction 4-CDP-2-C-methyl-D-erythritol + ATP = 4-CDP-2-C-methyl-D-erythritol 2-phosphate + ADP + H(+). Its pathway is isoprenoid biosynthesis; isopentenyl diphosphate biosynthesis via DXP pathway; isopentenyl diphosphate from 1-deoxy-D-xylulose 5-phosphate: step 3/6. Catalyzes the phosphorylation of the position 2 hydroxy group of 4-diphosphocytidyl-2C-methyl-D-erythritol. The protein is 4-diphosphocytidyl-2-C-methyl-D-erythritol kinase of Clostridium botulinum (strain Alaska E43 / Type E3).